A 133-amino-acid chain; its full sequence is Snaclec A9 (133 aa).

3 cysteine pairs are disulfide-bonded: C4–C15, C32–C131, and C106–C123. The region spanning 11-132 (YEGHCYKVFN…CGQPYRFTCE (122 aa)) is the C-type lectin domain.

Belongs to the snaclec family. In terms of assembly, heterodimer; disulfide-linked. As to expression, expressed by the venom gland.

It localises to the secreted. Interferes with one step of hemostasis (modulation of platelet aggregation, or coagulation cascade, for example). The chain is Snaclec A9 from Macrovipera lebetinus (Levantine viper).